Reading from the N-terminus, the 495-residue chain is Fusicoccadiene 8-ol C-16 hydroxylase (495 aa).

A helical transmembrane segment spans residues 12–32; the sequence is VLLALIVWIGTTIIYNIYFHP. 2 N-linked (GlcNAc...) asparagine glycosylation sites follow: Asn-249 and Asn-317. Cys-439 is a heme binding site.

The protein belongs to the cytochrome P450 family. Heme is required as a cofactor.

The protein localises to the membrane. Its pathway is mycotoxin biosynthesis. Cytochrome P450 monooxygenase; part of the gene cluster that mediates the biosynthesis of the diterpene glucoside brassicicene C. In the first step of the brassicicene C biosynthesis, the bifunctional diterpene synthase bsc8 that possesses both prenyl transferase and terpene cyclase activity, converts isopentenyl diphosphate and dimethylallyl diphosphate into geranylgeranyl diphosphate (GGDP) that is further converted into fusicocca-2,10(14)-diene, the first precursor for brassicicene C. Fusicocca-2,10(14)-diene is then substrate of cytochrome P450 monooxygenase bsc1 for hydroxylation at the C-8 position. Oxidation at C-16 position to aldehyde is then catalyzed by the cytochrome P450 monooyxygenase bsc7, yielding fusicocca-2,10(14)-diene-8-beta,16-diol. Follows the isomerization of the double bond and reduction of aldehyde to alcohol catalyzed by the short-chain dehydrogenase/reductase bsc3 to yield the diol compound fusicocca-1,10(14)-diene-8 beta,16-diol. The next step is the oxidation at the C-3 position of fusicocca-2,10(14)-diene-8-beta,16-diol catalyzed by the alpha-ketoglutarate dependent dioxygenase bsc9, to produce a triol compound. Methylation of the hydroxy group at position 16 is performed by the methyltransferase bsc6. 16-O-methylation is followed by oxidation at the C-13 position to ketone and an alkyl shift of the methyl group leads to brassicicene C. Although the probable acetyltransferase bsc4 is included in the gene cluster, no acetylation reactions are necessary for brassicicene C biosynthesis. However, the fact that brassicicene E, which is a structurally related compound having an acetoxy group at position 12, was previously isolated from another strain of A.brassicicola suggests that the ATCC 96836 strain might also produce a small amount of brassicicene E. The protein is Fusicoccadiene 8-ol C-16 hydroxylase of Alternaria brassicicola (Dark leaf spot agent).